Reading from the N-terminus, the 374-residue chain is tRNA-specific 2-thiouridylase MnmA (374 aa).

ATP contacts are provided by residues 10–17 and Leu36; that span reads AMSGGVDS. The Nucleophile role is filled by Cys111. A disulfide bond links Cys111 and Cys209. Gly135 provides a ligand contact to ATP. The segment at 159 to 161 is interaction with tRNA; that stretch reads KDQ. Residue Cys209 is the Cysteine persulfide intermediate of the active site.

This sequence belongs to the MnmA/TRMU family.

The protein localises to the cytoplasm. The catalysed reaction is S-sulfanyl-L-cysteinyl-[protein] + uridine(34) in tRNA + AH2 + ATP = 2-thiouridine(34) in tRNA + L-cysteinyl-[protein] + A + AMP + diphosphate + H(+). In terms of biological role, catalyzes the 2-thiolation of uridine at the wobble position (U34) of tRNA, leading to the formation of s(2)U34. This Acidobacterium capsulatum (strain ATCC 51196 / DSM 11244 / BCRC 80197 / JCM 7670 / NBRC 15755 / NCIMB 13165 / 161) protein is tRNA-specific 2-thiouridylase MnmA.